A 400-amino-acid chain; its full sequence is CinA-like protein (400 aa).

Belongs to the CinA family.

The polypeptide is CinA-like protein (Shigella flexneri).